The primary structure comprises 732 residues: Elongation factor 2 (732 aa).

Residues 19 to 260 form the tr-type G domain; that stretch reads ERIRNIGIAA…MVVRHLPSPI (242 aa). Residues 28-35, 94-98, and 148-151 each bind GTP; these read AHIDHGKT, DTPGH, and NKVD. H597 carries the diphthamide modification.

The protein belongs to the TRAFAC class translation factor GTPase superfamily. Classic translation factor GTPase family. EF-G/EF-2 subfamily.

The protein resides in the cytoplasm. Its function is as follows. Catalyzes the GTP-dependent ribosomal translocation step during translation elongation. During this step, the ribosome changes from the pre-translocational (PRE) to the post-translocational (POST) state as the newly formed A-site-bound peptidyl-tRNA and P-site-bound deacylated tRNA move to the P and E sites, respectively. Catalyzes the coordinated movement of the two tRNA molecules, the mRNA and conformational changes in the ribosome. The sequence is that of Elongation factor 2 (fusA) from Pyrococcus horikoshii (strain ATCC 700860 / DSM 12428 / JCM 9974 / NBRC 100139 / OT-3).